The primary structure comprises 217 residues: Ribosomal RNA small subunit methyltransferase G (217 aa).

S-adenosyl-L-methionine contacts are provided by residues G79, F84, 130 to 131 (AE), and R148.

This sequence belongs to the methyltransferase superfamily. RNA methyltransferase RsmG family.

The protein resides in the cytoplasm. The catalysed reaction is guanosine(527) in 16S rRNA + S-adenosyl-L-methionine = N(7)-methylguanosine(527) in 16S rRNA + S-adenosyl-L-homocysteine. Specifically methylates the N7 position of guanine in position 527 of 16S rRNA. This Myxococcus xanthus (strain DK1622) protein is Ribosomal RNA small subunit methyltransferase G.